The following is a 340-amino-acid chain: Ketol-acid reductoisomerase (NADP(+)) (340 aa).

The KARI N-terminal Rossmann domain maps to 1–182; the sequence is MRVYYDRDCD…GGGRSGIIET (182 aa). NADP(+)-binding positions include 24 to 27, Arg-48, Ser-51, Ser-53, and 83 to 86; these read YGSQ and DELQ. His-108 is an active-site residue. Residue Gly-134 coordinates NADP(+). One can recognise a KARI C-terminal knotted domain in the interval 183–329; sequence NFRQECETDL…EKLRGMMPWI (147 aa). The Mg(2+) site is built by Asp-191, Glu-195, Glu-227, and Glu-231. Residue Ser-252 coordinates substrate.

Belongs to the ketol-acid reductoisomerase family. Requires Mg(2+) as cofactor.

It carries out the reaction (2R)-2,3-dihydroxy-3-methylbutanoate + NADP(+) = (2S)-2-acetolactate + NADPH + H(+). It catalyses the reaction (2R,3R)-2,3-dihydroxy-3-methylpentanoate + NADP(+) = (S)-2-ethyl-2-hydroxy-3-oxobutanoate + NADPH + H(+). It functions in the pathway amino-acid biosynthesis; L-isoleucine biosynthesis; L-isoleucine from 2-oxobutanoate: step 2/4. Its pathway is amino-acid biosynthesis; L-valine biosynthesis; L-valine from pyruvate: step 2/4. In terms of biological role, involved in the biosynthesis of branched-chain amino acids (BCAA). Catalyzes an alkyl-migration followed by a ketol-acid reduction of (S)-2-acetolactate (S2AL) to yield (R)-2,3-dihydroxy-isovalerate. In the isomerase reaction, S2AL is rearranged via a Mg-dependent methyl migration to produce 3-hydroxy-3-methyl-2-ketobutyrate (HMKB). In the reductase reaction, this 2-ketoacid undergoes a metal-dependent reduction by NADPH to yield (R)-2,3-dihydroxy-isovalerate. This chain is Ketol-acid reductoisomerase (NADP(+)), found in Paracoccus denitrificans (strain Pd 1222).